Here is a 118-residue protein sequence, read N- to C-terminus: CLAVATA3/ESR (CLE)-related protein 12 (118 aa).

A signal peptide spans 1–35 (MLRISSSSSMALKFSQILFIVLWLSLFFLLLHHLY). Basic and acidic residues-rich tracts occupy residues 75–91 (TPFH…RSGE) and 98–108 (IDPRYGVEKRR). Residues 75–118 (TPFHSRDNSRHNHRSGEQYDGDEIDPRYGVEKRRVPSGPNPLHH) are disordered. 2 positions are modified to hydroxyproline: proline 110 and proline 113. Proline 113 is a glycosylation site (O-linked (Ara...) hydroxyproline).

This sequence belongs to the CLV3/ESR signal peptide family. The O-glycosylation (arabinosylation) of the hydroxyproline Pro-113 enhances binding affinity of the CLE12p peptide for its receptor. Mostly expressed in seedlings, roots, flowers, stems and apex, and, to a lower extent, in leaves and siliques.

It localises to the secreted. The protein resides in the extracellular space. Extracellular signal peptide that regulates cell fate. Represses root apical meristem maintenance. The protein is CLAVATA3/ESR (CLE)-related protein 12 of Arabidopsis thaliana (Mouse-ear cress).